The sequence spans 229 residues: Transmembrane protein 217 (229 aa).

The chain crosses the membrane as a helical span at residues 13-33; the sequence is MGTVLSGVFTIMAVDMYLIFE. Asparagine 39 carries N-linked (GlcNAc...) asparagine glycosylation. The next 3 helical transmembrane spans lie at 67–87, 94–114, and 129–149; these read IVLF…YSVY, LVIY…IQIL, and WFGL…VINY. N-linked (GlcNAc...) asparagine glycosylation occurs at asparagine 156.

Its subcellular location is the membrane. The protein is Transmembrane protein 217 (TMEM217) of Homo sapiens (Human).